A 190-amino-acid polypeptide reads, in one-letter code: Large ribosomal subunit protein bL17 (190 aa).

Residues 128-190 (KKTAGRKAAQ…VEENNEQNKA (63 aa)) are disordered. Residues 143 to 154 (ALAPAEETPAPT) are compositionally biased toward low complexity. Residues 179–190 (LAVEENNEQNKA) are compositionally biased toward acidic residues.

Belongs to the bacterial ribosomal protein bL17 family. Part of the 50S ribosomal subunit. Contacts protein L32.

The protein is Large ribosomal subunit protein bL17 of Salinispora tropica (strain ATCC BAA-916 / DSM 44818 / JCM 13857 / NBRC 105044 / CNB-440).